The sequence spans 152 residues: UPF0260 protein BAB1_1496 (152 aa).

It belongs to the UPF0260 family.

The chain is UPF0260 protein BAB1_1496 from Brucella abortus (strain 2308).